Reading from the N-terminus, the 102-residue chain is Citrate lyase acyl carrier protein (102 aa).

An O-(phosphoribosyl dephospho-coenzyme A)serine modification is found at Ser-14.

Belongs to the CitD family. As to quaternary structure, oligomer with a subunit composition of (alpha,beta,gamma)6.

Its subcellular location is the cytoplasm. Covalent carrier of the coenzyme of citrate lyase. This is Citrate lyase acyl carrier protein from Streptococcus equi subsp. equi (strain 4047).